The primary structure comprises 261 residues: Proline-rich protein HaeIII subfamily 1 (261 aa).

The first 15 residues, 1–15, serve as a signal peptide directing secretion; it reads MLVVLFTVALLALSS. The disordered stretch occupies residues 15–261; that stretch reads SAQGPREENQ…PPQGRPQGPR (247 aa). 2 stretches are compositionally biased toward pro residues: residues 32–44 and 51–237; these read QRPP…PRPP and GPPP…PPTG. Residues 238-261 show a composition bias toward low complexity; sequence GPQQTPPLAGNTQGPPQGRPQGPR.

It localises to the secreted. This is Proline-rich protein HaeIII subfamily 1 (Prh1) from Mus musculus (Mouse).